We begin with the raw amino-acid sequence, 266 residues long: GTP cyclohydrolase FolE2 (266 aa).

The protein belongs to the GTP cyclohydrolase IV family.

The catalysed reaction is GTP + H2O = 7,8-dihydroneopterin 3'-triphosphate + formate + H(+). Its pathway is cofactor biosynthesis; 7,8-dihydroneopterin triphosphate biosynthesis; 7,8-dihydroneopterin triphosphate from GTP: step 1/1. In terms of biological role, converts GTP to 7,8-dihydroneopterin triphosphate. The protein is GTP cyclohydrolase FolE2 of Methylobacillus flagellatus (strain ATCC 51484 / DSM 6875 / VKM B-1610 / KT).